A 138-amino-acid chain; its full sequence is Large ribosomal subunit protein uL16 (138 aa).

Basic residues predominate over residues 1 to 19 (MLIPKRVKYRRQHRPHRSG). The tract at residues 1 to 24 (MLIPKRVKYRRQHRPHRSGVSKGG) is disordered.

Belongs to the universal ribosomal protein uL16 family. In terms of assembly, part of the 50S ribosomal subunit.

In terms of biological role, binds 23S rRNA and is also seen to make contacts with the A and possibly P site tRNAs. This chain is Large ribosomal subunit protein uL16, found in Corynebacterium diphtheriae (strain ATCC 700971 / NCTC 13129 / Biotype gravis).